A 379-amino-acid polypeptide reads, in one-letter code: RNA-splicing ligase RtcB2 (379 aa).

Residues Asp-74, Cys-77, His-137, His-168, and His-239 each coordinate Mn(2+). 136 to 140 (NHFVE) contributes to the GMP binding site. GMP-binding positions include 239–240 (HN), Ser-277, 294–297 (HGAG), and Lys-372. His-294 acts as the GMP-histidine intermediate in catalysis.

The protein belongs to the RtcB family. RtcB2 subfamily. Mn(2+) serves as cofactor.

The catalysed reaction is a 3'-end 3'-phospho-ribonucleotide-RNA + a 5'-end dephospho-ribonucleoside-RNA + GTP = a ribonucleotidyl-ribonucleotide-RNA + GMP + diphosphate. In terms of biological role, GTP-dependent RNA ligase involved in rRNA repair. Repairs damaged 16S rRNA in 30S subunits that has been cleaved between adenine-1493 and guanosine-1494 (E.coli nubering). This specific cleavage is inflicted by CdiA (ECL_04451) or by colicin E3-type (ColE3) proteins. Poorly repairs damaged rRNA in the 70S ribosome; addition of release factor PrfH improves repair about 3-fold in vitro, probably because PrfH hydrolyzes the nascent chain allowing ribosomal subunit dissociation. In vivo the PrfH-RtcB2 pair restores growth in the presence of ribotoxins that specifically create this damage. Does not repair damaged tRNA (tested with tRNA(Asp) and tRNA(Arg)). The polypeptide is RNA-splicing ligase RtcB2 (Escherichia coli (strain ATCC 25922 / DSM 1103 / LMG 8223 / NCIMB 12210 / NCTC 12241 / WDCM 00013 / Seattle 1946)).